We begin with the raw amino-acid sequence, 79 residues long: D-alanyl carrier protein (79 aa).

The region spanning 1–77 (MDTKQGVLDI…KIVAKVESLE (77 aa)) is the Carrier domain. S35 carries the O-(pantetheine 4'-phosphoryl)serine modification.

The protein belongs to the DltC family. In terms of processing, 4'-phosphopantetheine is transferred from CoA to a specific serine of apo-DCP.

Its subcellular location is the cytoplasm. It participates in cell wall biogenesis; lipoteichoic acid biosynthesis. Carrier protein involved in the D-alanylation of lipoteichoic acid (LTA). The loading of thioester-linked D-alanine onto DltC is catalyzed by D-alanine--D-alanyl carrier protein ligase DltA. The DltC-carried D-alanyl group is further transferred to cell membrane phosphatidylglycerol (PG) by forming an ester bond, probably catalyzed by DltD. D-alanylation of LTA plays an important role in modulating the properties of the cell wall in Gram-positive bacteria, influencing the net charge of the cell wall. This Lactobacillus acidophilus (strain ATCC 700396 / NCK56 / N2 / NCFM) protein is D-alanyl carrier protein.